Here is a 233-residue protein sequence, read N- to C-terminus: Esterase FUS5 (233 aa).

Residues serine 105, aspartate 159, and histidine 187 each act as charge relay system in the active site.

This sequence belongs to the LovG family.

In terms of biological role, esterase; part of the gene cluster that mediates the biosynthesis of the mycotoxin fusarin C. Within the cluster, FUS1, FUS2, FUS8 and FUS9 are sufficient for fusarin production. The other FUS cluster members are not essential for fusarin C biosynthesis. This is Esterase FUS5 from Gibberella moniliformis (strain M3125 / FGSC 7600) (Maize ear and stalk rot fungus).